Reading from the N-terminus, the 157-residue chain is NADPH-dependent 7-cyano-7-deazaguanine reductase (157 aa).

Cysteine 55 (thioimide intermediate) is an active-site residue. The Proton donor role is filled by aspartate 62. Substrate is bound by residues 77–79 and 96–97; these read VES and HE.

The protein belongs to the GTP cyclohydrolase I family. QueF type 1 subfamily.

Its subcellular location is the cytoplasm. The catalysed reaction is 7-aminomethyl-7-carbaguanine + 2 NADP(+) = 7-cyano-7-deazaguanine + 2 NADPH + 3 H(+). Its pathway is tRNA modification; tRNA-queuosine biosynthesis. In terms of biological role, catalyzes the NADPH-dependent reduction of 7-cyano-7-deazaguanine (preQ0) to 7-aminomethyl-7-deazaguanine (preQ1). The protein is NADPH-dependent 7-cyano-7-deazaguanine reductase of Neisseria meningitidis serogroup C / serotype 2a (strain ATCC 700532 / DSM 15464 / FAM18).